We begin with the raw amino-acid sequence, 363 residues long: MKIGVFVPIGNNGWLISTHAPQYMPTFELNKAIVQKAEHYHFDFALSMIKLRGFGGKTEFWDHNLESFTLMAGLAAVTSKIQIYATAATLTLPPAIVARMASTIDSISGGRFGVNLVTGWQKPEYDQMGMWPGDDYFASRYDYLTEYVQVLRDLWGTGRSDFKGDYFTMNDCRVSPRPSQPMKVICAGQSDAGMAFSAQHADYNFCFGKGVNTPTAFAPTAARMIQAAEKTGRDVGSYVLFMVIADETDEAARAKWEHYKAGADEEALAWLTEQSQKDTRSGSDTNVRQMADPTSAVNINMGTLVGSYASIARMLDEVASVPGTDGVLLTFDDFLAGIDAFGERIQPLMRCRDHIAPVTREVA.

FMN is bound by residues 49 to 50 (IK), asparagine 115, glutamate 124, 140 to 141 (RY), and serine 190.

It belongs to the NtaA/SnaA/DszA monooxygenase family. RutA subfamily.

It catalyses the reaction uracil + FMNH2 + NADH + O2 = (Z)-3-ureidoacrylate + FMN + NAD(+) + H2O + H(+). The enzyme catalyses thymine + FMNH2 + NADH + O2 = (Z)-2-methylureidoacrylate + FMN + NAD(+) + H2O + H(+). Its function is as follows. Catalyzes the pyrimidine ring opening between N-3 and C-4 by an unusual flavin hydroperoxide-catalyzed mechanism, adding oxygen atoms in the process to yield ureidoacrylate peracid, that immediately reacts with FMN forming ureidoacrylate and FMN-N(5)-oxide. The FMN-N(5)-oxide reacts spontaneously with NADH to produce FMN. Requires the flavin reductase RutF to regenerate FMN in vivo. The chain is Pyrimidine monooxygenase RutA from Klebsiella pneumoniae (strain 342).